A 62-amino-acid chain; its full sequence is Metallothionein-4 (62 aa).

The a divalent metal cation site is built by Cys-6, Cys-8, Cys-14, Cys-16, Cys-20, Cys-22, Cys-25, Cys-27, Cys-30, Cys-34, Cys-35, Cys-37, Cys-38, Cys-42, Cys-45, Cys-49, Cys-51, Cys-58, Cys-60, and Cys-61.

Belongs to the metallothionein superfamily. Type 1 family.

In terms of biological role, seems to bind zinc and copper. Could play a special role in regulating zinc metabolism during the differentiation of stratified epithelia. The sequence is that of Metallothionein-4 (MT4) from Canis lupus familiaris (Dog).